We begin with the raw amino-acid sequence, 189 residues long: Apolipoprotein D (189 aa).

Residues 1 to 20 (MVPVLLLLPALAGLFGAAEG) form the signal peptide. Residue Gln21 is modified to Pyrrolidone carboxylic acid. 2 cysteine pairs are disulfide-bonded: Cys28–Cys134 and Cys61–Cys185. Asn65 and Asn98 each carry an N-linked (GlcNAc...) asparagine glycan.

Belongs to the calycin superfamily. Lipocalin family. In terms of assembly, homodimer.

It localises to the secreted. Functionally, APOD occurs in the macromolecular complex with lecithin-transport and binding of bilin. Appears to be able to transport a variety of ligands in a number of different contexts. The protein is Apolipoprotein D (APOD) of Bos taurus (Bovine).